Reading from the N-terminus, the 435-residue chain is Enolase (435 aa).

Residue glutamine 163 coordinates (2R)-2-phosphoglycerate. The active-site Proton donor is glutamate 205. Mg(2+) contacts are provided by aspartate 243, glutamate 292, and aspartate 319. Positions 344, 373, 374, and 395 each coordinate (2R)-2-phosphoglycerate. Lysine 344 serves as the catalytic Proton acceptor.

This sequence belongs to the enolase family. It depends on Mg(2+) as a cofactor.

Its subcellular location is the cytoplasm. The protein localises to the secreted. It localises to the cell surface. The enzyme catalyses (2R)-2-phosphoglycerate = phosphoenolpyruvate + H2O. Its pathway is carbohydrate degradation; glycolysis; pyruvate from D-glyceraldehyde 3-phosphate: step 4/5. In terms of biological role, catalyzes the reversible conversion of 2-phosphoglycerate (2-PG) into phosphoenolpyruvate (PEP). It is essential for the degradation of carbohydrates via glycolysis. This Streptococcus suis (strain 98HAH33) protein is Enolase.